We begin with the raw amino-acid sequence, 699 residues long: PTS system glucose-specific EIICBA component (699 aa).

Residues 3-424 form the PTS EIIC type-1 domain; that stretch reads KALFGVLQKI…FNLKTPGRED (422 aa). A run of 11 helical transmembrane segments spans residues 16 to 36, 66 to 86, 89 to 109, 139 to 159, 180 to 200, 233 to 253, 283 to 303, 313 to 333, 338 to 358, 365 to 385, and 388 to 408; these read LMLP…GNAM, IVFD…LANG, VAGI…SAVL, IPTL…AALL, FVPI…LVIW, LIPF…FFSY, FMTG…LAIY, LVAG…ITEP, FLFV…LSFM, VKIG…GILP, and TAWW…YFGF. The PTS EIIB type-1 domain occupies 439–520; the sequence is GDLPYEILQA…QDIIAGRKPR (82 aa). C461 functions as the Phosphocysteine intermediate; for EIIB activity in the catalytic mechanism. A PTS EIIA type-1 domain is found at 568-672; that stretch reads DQVFSGKMMG…SLMTPIVFTN (105 aa). H620 serves as the catalytic Tele-phosphohistidine intermediate; for EIIA activity.

The protein resides in the cell membrane. It catalyses the reaction N(pros)-phospho-L-histidyl-[protein] + D-glucose(out) = D-glucose 6-phosphate(in) + L-histidyl-[protein]. The catalysed reaction is D-glucosamine(out) + N(pros)-phospho-L-histidyl-[protein] = D-glucosamine 6-phosphate(in) + L-histidyl-[protein]. In terms of biological role, the phosphoenolpyruvate-dependent sugar phosphotransferase system (sugar PTS), a major carbohydrate active transport system, catalyzes the phosphorylation of incoming sugar substrates concomitantly with their translocation across the cell membrane. This system is involved in glucose transport. The system can also transport glucosamine. Its function is as follows. In addition, plays an important role in the phosphorylation of EIIA-deficient PTS transporters. The EIIA domain can transfer a phosphoryl group to EIIA-deficient PTS transporters, enabling growth with maltose, N-acetylglucosamine, sucrose or trehalose as the sole carbon source. The chain is PTS system glucose-specific EIICBA component (ptsG) from Bacillus subtilis (strain 168).